A 949-amino-acid polypeptide reads, in one-letter code: Coiled-coil domain-containing protein 66 (949 aa).

2 positions are modified to phosphothreonine: T115 and T121. Phosphoserine is present on S369. The stretch at 474-558 (QVEEKCRKKQ…EQRIRELAQK (85 aa)) forms a coiled coil. A mediates localization to cilia, centrosomes and spindle microtubules and the interaction with PCM1, CEP290, CEP104 and CSPP1 region spans residues 570-949 (GVDTIQIEYN…NQEENFGSSF (380 aa)). S606 is subject to Phosphoserine. 2 disordered regions span residues 691–714 (QTKHMKKYPKRPDWNINKPPKRYI) and 789–809 (SFSKERSPSSPVPAVKNRTQQ).

In terms of assembly, homodimer; disulfide-linked. Interacts with CEP290. Interacts with PCM1. Interacts with ARMC9, TOGARAM1, CSPP1 and CEP104. Interacts with CDK5RAP2, CEP152, CEP192, TBG1 and PRC1.

Its subcellular location is the cytoplasm. The protein localises to the cytoskeleton. The protein resides in the microtubule organizing center. It localises to the centrosome. It is found in the centriolar satellite. Its subcellular location is the cell projection. The protein localises to the cilium. The protein resides in the cilium basal body. It localises to the cilium axoneme. It is found in the photoreceptor inner segment. Its subcellular location is the photoreceptor outer segment. Microtubule-binding protein required for ciliogenesis. May function in ciliogenesis by mediating the transport of proteins like BBS4 to the cilium, but also through the organization of the centriolar satellites. Required for the assembly of signaling-competent cilia with proper structure and length. Mediates this function in part by regulating transition zone assembly and basal body recruitment of the IFT-B complex. Cooperates with the ciliopathy proteins CSPP1 and CEP104 during cilium length regulation. Plays two important roles during cell division. First, is required for mitotic progression via regulation of spindle assembly, organization and orientation, levels of spindle microtubules (MTs), kinetochore-fiber integrity, and chromosome alignment. Second, functions during cytokinesis in part by regulating assembly and organization of central spindle and midbody MTs Plays a role in retina morphogenesis and/or homeostasis. This is Coiled-coil domain-containing protein 66 from Pongo abelii (Sumatran orangutan).